A 465-amino-acid chain; its full sequence is Ribulose bisphosphate carboxylase large chain (465 aa).

Position 4 is an N6,N6,N6-trimethyllysine (K4). Residues N113 and T163 each contribute to the substrate site. K165 (proton acceptor) is an active-site residue. A substrate-binding site is contributed by K167. The Mg(2+) site is built by K191, D193, and E194. N6-carboxylysine is present on K191. H284 functions as the Proton acceptor in the catalytic mechanism. Substrate-binding residues include R285, H317, and S369.

Belongs to the RuBisCO large chain family. Type I subfamily. As to quaternary structure, heterohexadecamer of 8 large chains and 8 small chains; disulfide-linked. The disulfide link is formed within the large subunit homodimers. Mg(2+) is required as a cofactor. The disulfide bond which can form in the large chain dimeric partners within the hexadecamer appears to be associated with oxidative stress and protein turnover.

Its subcellular location is the plastid. The protein localises to the chloroplast. The catalysed reaction is 2 (2R)-3-phosphoglycerate + 2 H(+) = D-ribulose 1,5-bisphosphate + CO2 + H2O. The enzyme catalyses D-ribulose 1,5-bisphosphate + O2 = 2-phosphoglycolate + (2R)-3-phosphoglycerate + 2 H(+). Functionally, ruBisCO catalyzes two reactions: the carboxylation of D-ribulose 1,5-bisphosphate, the primary event in carbon dioxide fixation, as well as the oxidative fragmentation of the pentose substrate in the photorespiration process. Both reactions occur simultaneously and in competition at the same active site. The polypeptide is Ribulose bisphosphate carboxylase large chain (Cassia fistula (Golden shower tree)).